Reading from the N-terminus, the 169-residue chain is Peptide methionine sulfoxide reductase MsrA (169 aa).

C10 is an active-site residue.

It belongs to the MsrA Met sulfoxide reductase family.

The catalysed reaction is L-methionyl-[protein] + [thioredoxin]-disulfide + H2O = L-methionyl-(S)-S-oxide-[protein] + [thioredoxin]-dithiol. It catalyses the reaction [thioredoxin]-disulfide + L-methionine + H2O = L-methionine (S)-S-oxide + [thioredoxin]-dithiol. Its function is as follows. Has an important function as a repair enzyme for proteins that have been inactivated by oxidation. Catalyzes the reversible oxidation-reduction of methionine sulfoxide in proteins to methionine. This is Peptide methionine sulfoxide reductase MsrA from Streptococcus equi subsp. zooepidemicus (strain MGCS10565).